Consider the following 379-residue polypeptide: uncharacterized protein (379 aa).

This is an uncharacterized protein from Tortricidae (ClGV).